Here is a 178-residue protein sequence, read N- to C-terminus: Large ribosomal subunit protein uL6 (178 aa).

It belongs to the universal ribosomal protein uL6 family. As to quaternary structure, part of the 50S ribosomal subunit.

Its function is as follows. This protein binds to the 23S rRNA, and is important in its secondary structure. It is located near the subunit interface in the base of the L7/L12 stalk, and near the tRNA binding site of the peptidyltransferase center. This Francisella philomiragia subsp. philomiragia (strain ATCC 25017 / CCUG 19701 / FSC 153 / O#319-036) protein is Large ribosomal subunit protein uL6.